We begin with the raw amino-acid sequence, 2194 residues long: MGAQVSTQKTGAHETGLSASGNSVIHYTNINYYKDSASNSLNRQDFTQDPSRFTEPVQDVLIKTLPALNSPTVEECGYSDRVRSITLGNSTITTQECANVVVGYGVWPTYLSDHEATAVDQPTQPDVATCRFYTLESVKWESSSAGWWWKFPEALSDMGLFGQNMQYHYLGRAGYTIHVQCNASKFHQGCLLVVCVPEAEMGAATTDHAMNHTKLSNIGQAMEFSAGKSTDQTGPQTAVHNAGMGVAVGNLTIYPHQWINLRTNNSATIVMPYINSVPMDNMYRHYNFTLMVIPFAKLEHSPQASTYVPITVTVAPMCAEYNGLRLAGHQGLPTMNTPGSTQFLTSDDFQSPSAMPQFDVTPEIQIPGQVRNLMEIAEVDSVVPVDNTEEHVNSIEAYRIPVRPQTNSGEQVFGFQLQPGYDSVLKHTLLGEILNYYANWSGSMKLTFMYCGAAMATGKFLIAYSPPGAGVPGSRKDAMLGTHVIWDVGLQSSCVLCVPWISQTNYRYVTRDAYTDAGYITCWYQTSIVTPPDIPTTSTILCFVSACNDFSVRLLRDTPFITQQALYQNDPEGALNKAVGRVADTIASGPVNTEQIPALTAVETGHTSQVVPSDTMQTRHVVNFHTRSESSLENFMGRAACAYIAHYTTEKANDDLDRYTNWEITTRQVAQLRRKLEMFTYMRFDLEITFVITSSQRTSNRYASDSPPLTHQIMYVPPGGPIPKGYEDFAWQTSTNPSVFWTEGNAPPRMSIPFMSVGNAYCNFYDGWSHFSQSGVYGYTTLNNMGHLYFRHVNKSTAYPVNSVARVYFKPKHVKAWVPRAPRLCPYLYAKNVNFDVQGVTESRGKITLDRSTHNPVLTTGAFEQQSGAAYVGNYRLVNRHLATHTDWQNCVWKDYNRDLLVSTTTAHGCDTIARCQCTTGVYFCASRNKHYPVTFEGPGLVEVQESEYYPKRYQSHVLLAAGFSEPGDCGGILRCEHGVIGLVTMGGEGVVGFADVRDLLWLEDDAMEQGVKDYVEQLGNAFGSGFTNQICEQVNLLKESLIGQDSILEKSLKALVKIISALVIVVRNHDDLITVTATLALIGCTTSPWRWLKHKVSQYYGIPMAERQNNNWLKKFTEMTNACKGMEWIAIKIQKFIEWLKVKILPEVKEKHEFLNRLKQLPLLESQIATIEQSAPSQSDQEQLFSNVQYFAHYCRKYAPLYAAEAKRVFSLEKKMSNYIQFKSKCRIEPVCLLLHGSPGAGKSVATNLIGRSLAEKLNSSVYSLPPDPDHFDGYKQQAVVIMDDLCQNPDGKDVSLFCQMVSSVDFVPPMAALEEKGILFTSPFVLASTNAGSINAPTVSDSRALARRFHFDMNIEVISMYSQNGKINMPMSVKTCDEECCPVNFKRCCPLVCGKAIQFIDRRTQVRYSLDMLVTEMFREYNHRHSVGATLEALFQGPPVYREIKISVAPETPPPPAIADLLKSVDSEAVREYCKEKGWLVPEINSTLQIEKHVSRAFICLQALTTFVSVAGIIYIIYKLFAGFQGAYSGMPNQKSKVPTLRQAKVQGPAFEFAVAMMKRNASTVKTEYGEFTMLGIYDRWAVLPRHAKPGPTIIMNDQEVGVVDAKELVDKDGTNLELTLLKLNRNEKFRDIRGFLAREEAEVNEAVLAINTSKFPNMYIPVGQVTDYGFLNLGGTPTKRMLMYNFPTRAGQCGGVLMSTGKVLGVHVGGNGHQGFSAALLRHYFNDEQGEIEFIESSKEAGFPVINTPSKTKLEPSVFHHVFEGNKEPAVLRNGDPRLKANFEEAIFSKYIGNVNTHVDEYMMEAVDHYAGQLATLDISTEPMKLEDAVYGTEGLEALDLTTSAGYPYVALGIKKRDILSKKTKDLAKLKECMDKYGLNLPMVTYVKDELRSAEKVAKGKSRLIEASSLNDSVAMRQTFGNLYKTFHMNPGIVTGSAVGCDPDLFWSKIPVMLDGHLIAFDYSGYDASLSPVWFACLKLLLEKLGYSHKETNYIDYLCNSHHLYRDKHYFVRGGMPSGCSGTSIFNSMINNIIIRTLMLKVYKGIDLDQFRMIAYGDDVIASYPHPIDASLLAEAGKGYGLIMTPADKGECFNEVTWTNVTFLKRYFRADEQYPFLVHPVMPMKDIHESIRWTKDPKNTQDHVRSLCLLAWHNGEQEYEEFVSKIRSVPVGRCLTLPAFSTLRRKWLDSF.

A lipid anchor (N-myristoyl glycine; by host) is attached at Gly-2. Residues 2–1504 are Cytoplasmic-facing; it reads GAQVSTQKTG…HVSRAFICLQ (1503 aa). The interval 566-582 is amphipathic alpha-helix; it reads LYQNDPEGALNKAVGRV. Active-site for protease 2A activity residues include His-881 and Asp-899. 2 residues coordinate Zn(2+): Cys-916 and Cys-918. Residue Cys-970 is the For protease 2A activity of the active site. Residues Cys-976 and His-978 each coordinate Zn(2+). Positions 1110-1182 are membrane-binding; that stretch reads NNNWLKKFTE…EQSAPSQSDQ (73 aa). The interval 1110–1248 is oligomerization; that stretch reads NNNWLKKFTE…SPGAGKSVAT (139 aa). Residues 1131–1135 form an RNA-binding region; it reads AIKIQ. One can recognise an SF3 helicase domain in the interval 1214 to 1370; sequence EKKMSNYIQF…SMYSQNGKIN (157 aa). Positions 1378, 1390, and 1395 each coordinate Zn(2+). Residues 1378-1395 form a C4-type; degenerate zinc finger; sequence CDEECCPVNFKRCCPLVC. Residues 1422-1429 are RNA-binding; sequence EYNHRHSV. The interval 1433-1438 is oligomerization; the sequence is LEALFQ. Residues 1505–1520 lie within the membrane without spanning it; it reads ALTTFVSVAGIIYIIY. Over 1521 to 2194 the chain is Cytoplasmic; sequence KLFAGFQGAY…TLRRKWLDSF (674 aa). At Tyr-1530 the chain carries O-(5'-phospho-RNA)-tyrosine. Residues 1550–1728 enclose the Peptidase C3 domain; it reads GPAFEFAVAM…FSAALLRHYF (179 aa). Catalysis depends on for protease 3C activity residues His-1589, Glu-1620, and Cys-1696. Residues 1959–2075 form the RdRp catalytic domain; it reads GHLIAFDYSG…SYPHPIDASL (117 aa). Mg(2+) is bound by residues Asp-1965 and Asp-2061.

It belongs to the picornaviruses polyprotein family. In terms of assembly, interacts with capsid protein VP1 and capsid protein VP3 to form heterotrimeric protomers. Interacts with capsid protein VP0, and capsid protein VP3 to form heterotrimeric protomers. Five protomers subsequently associate to form pentamers which serve as building blocks for the capsid. Interacts with capsid protein VP2, capsid protein VP3 and capsid protein VP4 following cleavage of capsid protein VP0. As to quaternary structure, interacts with capsid protein VP1 and capsid protein VP3 in the mature capsid. In terms of assembly, interacts with capsid protein VP0 and capsid protein VP1 to form heterotrimeric protomers. Five protomers subsequently associate to form pentamers which serve as building blocks for the capsid. Interacts with capsid protein VP4 in the mature capsid. Interacts with protein 2C; this interaction may be important for virion morphogenesis. Interacts with capsid protein VP1 and capsid protein VP3. As to quaternary structure, homodimer. In terms of assembly, homohexamer; forms a hexameric ring structure with 6-fold symmetry characteristic of AAA+ ATPases. Interacts (via N-terminus) with host RTN3 (via reticulon domain); this interaction is important for viral replication. Interacts with capsid protein VP3; this interaction may be important for virion morphogenesis. Interacts with protein 3CD. As to quaternary structure, homodimer. Interacts with host GBF1. Interacts (via GOLD domain) with host ACBD3 (via GOLD domain); this interaction allows the formation of a viral protein 3A/ACBD3 heterotetramer with a 2:2 stoichiometry, which will stimulate the recruitment of host PI4KB in order to synthesize PI4P at the viral RNA replication sites. In terms of assembly, interacts with RNA-directed RNA polymerase. Interacts with protein 3AB and with RNA-directed RNA polymerase. As to quaternary structure, interacts with Viral protein genome-linked and with protein 3CD. Mg(2+) is required as a cofactor. Specific enzymatic cleavages in vivo by the viral proteases yield processing intermediates and the mature proteins. In terms of processing, myristoylation is required for the formation of pentamers during virus assembly. Further assembly of 12 pentamers and a molecule of genomic RNA generates the provirion. Post-translationally, during virion maturation, immature virions are rendered infectious following cleavage of VP0 into VP4 and VP2. This maturation seems to be an autocatalytic event triggered by the presence of RNA in the capsid and it is followed by a conformational change infectious virion. Myristoylation is required during RNA encapsidation and formation of the mature virus particle. In terms of processing, VPg is uridylylated by the polymerase into VPg-pUpU. This acts as a nucleotide-peptide primer for the genomic RNA replication.

It localises to the virion. It is found in the host cytoplasm. The protein resides in the host cytoplasmic vesicle membrane. The protein localises to the host nucleus. It carries out the reaction a ribonucleoside 5'-triphosphate + H2O = a ribonucleoside 5'-diphosphate + phosphate + H(+). The catalysed reaction is Selective cleavage of Tyr-|-Gly bond in the picornavirus polyprotein.. It catalyses the reaction RNA(n) + a ribonucleoside 5'-triphosphate = RNA(n+1) + diphosphate. The enzyme catalyses Selective cleavage of Gln-|-Gly bond in the poliovirus polyprotein. In other picornavirus reactions Glu may be substituted for Gln, and Ser or Thr for Gly.. Replication or transcription is subject to high level of random mutations by the nucleotide analog ribavirin. Its function is as follows. Forms an icosahedral capsid of pseudo T=3 symmetry with capsid proteins VP2 and VP3. The capsid is 300 Angstroms in diameter, composed of 60 copies of each capsid protein and enclosing the viral positive strand RNA genome. Capsid protein VP1 mainly forms the vertices of the capsid. Capsid protein VP1 interacts with host cell receptor to provide virion attachment to target host cells. This attachment induces virion internalization. Tyrosine kinases are probably involved in the entry process. After binding to its receptor, the capsid undergoes conformational changes. Capsid protein VP1 N-terminus (that contains an amphipathic alpha-helix) and capsid protein VP4 are externalized. Together, they shape a pore in the host membrane through which viral genome is translocated to host cell cytoplasm. Forms an icosahedral capsid of pseudo T=3 symmetry with capsid proteins VP2 and VP3. The capsid is 300 Angstroms in diameter, composed of 60 copies of each capsid protein and enclosing the viral positive strand RNA genome. Functionally, lies on the inner surface of the capsid shell. After binding to the host receptor, the capsid undergoes conformational changes. Capsid protein VP4 is released, Capsid protein VP1 N-terminus is externalized, and together, they shape a pore in the host membrane through which the viral genome is translocated into the host cell cytoplasm. In terms of biological role, component of immature procapsids, which is cleaved into capsid proteins VP4 and VP2 after maturation. Allows the capsid to remain inactive before the maturation step. Its function is as follows. Cysteine protease that cleaves viral polyprotein and specific host proteins. It is responsible for the autocatalytic cleavage between the P1 and P2 regions, which is the first cleavage occurring in the polyprotein. Also cleaves the host translation initiation factor EIF4G1, in order to shut down the capped cellular mRNA translation. Inhibits the host nucleus-cytoplasm protein and RNA trafficking by cleaving host members of the nuclear pores. Counteracts stress granule formation probably by antagonizing its assembly or promoting its dissassembly. Plays an essential role in the virus replication cycle by acting as a viroporin. Creates a pore in the host endoplasmic reticulum and as a consequence releases Ca2+ in the cytoplasm of infected cell. In turn, high levels of cytoplasmic calcium may trigger membrane trafficking and transport of viral ER-associated proteins to viroplasms, sites of viral genome replication. Functionally, induces and associates with structural rearrangements of intracellular membranes. Displays RNA-binding, nucleotide binding and NTPase activities. May play a role in virion morphogenesis and viral RNA encapsidation by interacting with the capsid protein VP3. In terms of biological role, localizes the viral replication complex to the surface of membranous vesicles. Together with protein 3CD binds the Cis-Active RNA Element (CRE) which is involved in RNA synthesis initiation. Acts as a cofactor to stimulate the activity of 3D polymerase, maybe through a nucleid acid chaperone activity. Its function is as follows. Localizes the viral replication complex to the surface of membranous vesicles. It inhibits host cell endoplasmic reticulum-to-Golgi apparatus transport and causes the disassembly of the Golgi complex, possibly through GBF1 interaction. This would result in depletion of MHC, trail receptors and IFN receptors at the host cell surface. Plays an essential role in viral RNA replication by recruiting ACBD3 and PI4KB at the viral replication sites, thereby allowing the formation of the rearranged membranous structures where viral replication takes place. Acts as a primer for viral RNA replication and remains covalently bound to viral genomic RNA. VPg is uridylylated prior to priming replication into VPg-pUpU. The oriI viral genomic sequence may act as a template for this. The VPg-pUpU is then used as primer on the genomic RNA poly(A) by the RNA-dependent RNA polymerase to replicate the viral genome. During genome replication, the VPg-RNA linkage is removed by the host TDP2, thereby accelerating replication. During the late stage of the replication cycle, host TDP2 is excluded from sites of viral RNA synthesis and encapsidation, allowing for the generation of progeny virions. Functionally, involved in the viral replication complex and viral polypeptide maturation. It exhibits protease activity with a specificity and catalytic efficiency that is different from protease 3C. Protein 3CD lacks polymerase activity. Protein 3CD binds to the 5'UTR of the viral genome. In terms of biological role, replicates the viral genomic RNA on the surface of intracellular membranes. May form linear arrays of subunits that propagate along a strong head-to-tail interaction called interface-I. Covalently attaches UMP to a tyrosine of VPg, which is used to prime RNA synthesis. The positive stranded RNA genome is first replicated at virus induced membranous vesicles, creating a dsRNA genomic replication form. This dsRNA is then used as template to synthesize positive stranded RNA genomes. ss(+)RNA genomes are either translated, replicated or encapsidated. Its function is as follows. Major viral protease that mediates proteolytic processing of the polyprotein. Cleaves host EIF5B, contributing to host translation shutoff. Also cleaves host PABPC1, contributing to host translation shutoff. Cleaves host NLRP1, triggers host N-glycine-mediated degradation of the autoinhibitory NLRP1 N-terminal fragment. The protein is Genome polyprotein of Homo sapiens (Human).